We begin with the raw amino-acid sequence, 239 residues long: Ribose-5-phosphate isomerase A (239 aa).

Substrate-binding positions include 40–43 (SGST), 96–99 (DGAD), and 110–113 (KGGG). The active-site Proton acceptor is Glu-119. Lys-137 is a substrate binding site.

Belongs to the ribose 5-phosphate isomerase family. In terms of assembly, homodimer.

The catalysed reaction is aldehydo-D-ribose 5-phosphate = D-ribulose 5-phosphate. Its pathway is carbohydrate degradation; pentose phosphate pathway; D-ribose 5-phosphate from D-ribulose 5-phosphate (non-oxidative stage): step 1/1. Functionally, catalyzes the reversible conversion of ribose-5-phosphate to ribulose 5-phosphate. This chain is Ribose-5-phosphate isomerase A, found in Methanococcus vannielii (strain ATCC 35089 / DSM 1224 / JCM 13029 / OCM 148 / SB).